The chain runs to 326 residues: MGLGSRLDACLAREVAGGDRPIAAVLAALAEAAAGTGRLLRDGGADAGPDDLDAAVQARFVAALRETPTALLALPEAEAPLALMPDGAIAVALTPLDGRENLAGNQPAGTLFSLRPAAGAPFREPGRIQVAAGFVTYGPRTELAVTWGAGARIFTLDPSGAFRLSREAVAIPPTSTLYAIDAANARFWEAPMRAFVEDCLRGSEGPRGQDFAMGWCASLAVGAQRALCRGGVHILPGETRRGRANGATRLIHEAAPIALVMEAAGGAATDGRDARILDLPTLDLQQRTPLVFGSAEEVACVGKYHDGRRHTGARSPLFGQRGLLRA.

It belongs to the FBPase class 1 family. As to quaternary structure, homotetramer.

Its subcellular location is the cytoplasm. It catalyses the reaction beta-D-fructose 1,6-bisphosphate + H2O = beta-D-fructose 6-phosphate + phosphate. Its pathway is carbohydrate biosynthesis; gluconeogenesis. This Methylobacterium sp. (strain 4-46) protein is Fructose-1,6-bisphosphatase class 1.